Here is a 446-residue protein sequence, read N- to C-terminus: NAD(P)H sulfur oxidoreductase (CoA-dependent) (446 aa).

FAD is bound at residue 17–18 (AA). Arginine 28 contributes to the CoA binding site. FAD is bound by residues 39 to 40 (EA) and 46 to 48 (HAP). CoA is bound by residues 45-49 (SHAPC), 66-67 (HY), and arginine 76. Cysteine 49 acts as the Redox-active in catalysis. 3 residues coordinate FAD: valine 86, aspartate 284, and alanine 302. CoA is bound by residues asparagine 306 and lysine 362. Tyrosine 426 contributes to the FAD binding site. Positions 434 and 442 each coordinate CoA.

This sequence belongs to the class-III pyridine nucleotide-disulfide oxidoreductase family. It depends on FAD as a cofactor.

The catalysed reaction is hydrogen sulfide + NADP(+) = sulfur + NADPH. It catalyses the reaction hydrogen sulfide + NAD(+) = sulfur + NADH. Catalyzes the CoA-dependent reduction of elemental sulfur (S(0)) to produce hydrogen sulfide. The sequence is that of NAD(P)H sulfur oxidoreductase (CoA-dependent) from Pyrococcus abyssi (strain GE5 / Orsay).